The following is a 209-amino-acid chain: Glycerol-3-phosphate acyltransferase (209 aa).

Helical transmembrane passes span 4-24, 53-75, 80-102, 112-132, and 138-158; these read IAIG…AILI, LAAA…IGYG, PFWL…FFHF, LGAI…TWLL, and GYSS…VWWF.

This sequence belongs to the PlsY family. As to quaternary structure, probably interacts with PlsX.

It localises to the cell inner membrane. It catalyses the reaction an acyl phosphate + sn-glycerol 3-phosphate = a 1-acyl-sn-glycero-3-phosphate + phosphate. It participates in lipid metabolism; phospholipid metabolism. Functionally, catalyzes the transfer of an acyl group from acyl-phosphate (acyl-PO(4)) to glycerol-3-phosphate (G3P) to form lysophosphatidic acid (LPA). This enzyme utilizes acyl-phosphate as fatty acyl donor, but not acyl-CoA or acyl-ACP. This is Glycerol-3-phosphate acyltransferase from Sodalis glossinidius (strain morsitans).